The following is a 335-amino-acid chain: Pro-cathepsin H (335 aa).

Residues 1 to 22 (MWATLPLLCAGAWLLGVPVCGA) form the signal peptide. Residues 23 to 97 (AELCVNSLEK…AEIKHKYLWS (75 aa)) constitute a propeptide, activation peptide. A glycan (N-linked (GlcNAc...) asparagine) is linked at Asn-101. Cystine bridges form between Cys-102–Cys-327, Cys-138–Cys-181, Cys-172–Cys-214, and Cys-272–Cys-322. A propeptide spanning residues 106 to 115 (KSNYLRGTGP) is cleaved from the precursor. The active site involves Cys-141. N-linked (GlcNAc...) asparagine glycosylation is present at Asn-230. Catalysis depends on residues His-281 and Asn-301.

It belongs to the peptidase C1 family. As to quaternary structure, composed of a mini chain and a large chain. The large chain may be split into heavy and light chain. All chains are held together by disulfide bonds.

It localises to the lysosome. The enzyme catalyses Hydrolysis of proteins, acting as an aminopeptidase (notably, cleaving Arg-|-Xaa bonds) as well as an endopeptidase.. In terms of biological role, important for the overall degradation of proteins in lysosomes. The chain is Pro-cathepsin H (CTSH) from Homo sapiens (Human).